Reading from the N-terminus, the 131-residue chain is Large ribosomal subunit protein mL60 (131 aa).

A mitochondrion-targeting transit peptide spans 1-12 (MFGPFKLTSPVA).

This sequence belongs to the mitochondrion-specific ribosomal protein mL60 family. Component of the mitochondrial large ribosomal subunit (mt-LSU). Mature yeast 74S mitochondrial ribosomes consist of a small (37S) and a large (54S) subunit. The 37S small subunit contains a 15S ribosomal RNA (15S mt-rRNA) and 34 different proteins. The 54S large subunit contains a 21S rRNA (21S mt-rRNA) and 46 different proteins.

Its subcellular location is the mitochondrion. Component of the mitochondrial ribosome (mitoribosome), a dedicated translation machinery responsible for the synthesis of mitochondrial genome-encoded proteins, including at least some of the essential transmembrane subunits of the mitochondrial respiratory chain. The mitoribosomes are attached to the mitochondrial inner membrane and translation products are cotranslationally integrated into the membrane. The protein is Large ribosomal subunit protein mL60 (MRPL31) of Saccharomyces cerevisiae (strain ATCC 204508 / S288c) (Baker's yeast).